The following is a 174-amino-acid chain: Cytidylate kinase (174 aa).

Position 7–15 (7–15 (GLPGTGTTT)) interacts with ATP.

This sequence belongs to the cytidylate kinase family. Type 2 subfamily.

Its subcellular location is the cytoplasm. The enzyme catalyses CMP + ATP = CDP + ADP. It carries out the reaction dCMP + ATP = dCDP + ADP. This Methanococcus vannielii (strain ATCC 35089 / DSM 1224 / JCM 13029 / OCM 148 / SB) protein is Cytidylate kinase.